Reading from the N-terminus, the 398-residue chain is 1-deoxy-D-xylulose 5-phosphate reductoisomerase (398 aa).

NADPH-binding residues include Thr10, Gly11, Ser12, Ile13, Gly36, Lys37, Asn38, and Asn124. Residue Lys125 participates in 1-deoxy-D-xylulose 5-phosphate binding. Glu126 serves as a coordination point for NADPH. Asp150 contributes to the Mn(2+) binding site. Ser151, Glu152, Ser186, and His209 together coordinate 1-deoxy-D-xylulose 5-phosphate. Glu152 is a binding site for Mn(2+). Gly215 contacts NADPH. 1-deoxy-D-xylulose 5-phosphate contacts are provided by Ser222, Asn227, Lys228, and Glu231. Residue Glu231 coordinates Mn(2+).

The protein belongs to the DXR family. Homodimer. Mg(2+) is required as a cofactor. It depends on Mn(2+) as a cofactor.

It carries out the reaction 2-C-methyl-D-erythritol 4-phosphate + NADP(+) = 1-deoxy-D-xylulose 5-phosphate + NADPH + H(+). Its pathway is isoprenoid biosynthesis; isopentenyl diphosphate biosynthesis via DXP pathway; isopentenyl diphosphate from 1-deoxy-D-xylulose 5-phosphate: step 1/6. Catalyzes the NADPH-dependent rearrangement and reduction of 1-deoxy-D-xylulose-5-phosphate (DXP) to 2-C-methyl-D-erythritol 4-phosphate (MEP). The sequence is that of 1-deoxy-D-xylulose 5-phosphate reductoisomerase from Salmonella paratyphi A (strain ATCC 9150 / SARB42).